We begin with the raw amino-acid sequence, 86 residues long: DNA-directed RNA polymerase subunit omega (86 aa).

Positions 67–76 (SAREHAKESQ) are enriched in basic and acidic residues. The segment at 67–86 (SAREHAKESQVSEEEVREES) is disordered. Residues 77 to 86 (VSEEEVREES) show a composition bias toward acidic residues.

The protein belongs to the RNA polymerase subunit omega family. As to quaternary structure, the RNAP catalytic core consists of 2 alpha, 1 beta, 1 beta' and 1 omega subunit. When a sigma factor is associated with the core the holoenzyme is formed, which can initiate transcription.

It catalyses the reaction RNA(n) + a ribonucleoside 5'-triphosphate = RNA(n+1) + diphosphate. Functionally, promotes RNA polymerase assembly. Latches the N- and C-terminal regions of the beta' subunit thereby facilitating its interaction with the beta and alpha subunits. The sequence is that of DNA-directed RNA polymerase subunit omega from Nitrosococcus oceani (strain ATCC 19707 / BCRC 17464 / JCM 30415 / NCIMB 11848 / C-107).